The sequence spans 530 residues: Anthranilate synthase component 1, pyocyanine specific (530 aa).

331–332 (GT) lines the substrate pocket. Glutamate 364 contributes to the Mg(2+) binding site. Substrate is bound by residues tyrosine 452, arginine 472, 486–488 (GAG), and glycine 488. Glutamate 501 lines the Mg(2+) pocket.

The protein belongs to the anthranilate synthase component I family. In terms of assembly, heterotetramer consisting of two non-identical subunits: a beta subunit (PhnB) and a large alpha subunit (PhnA). It depends on Mg(2+) as a cofactor.

The enzyme catalyses chorismate + L-glutamine = anthranilate + pyruvate + L-glutamate + H(+). It participates in secondary metabolite biosynthesis; pyocyanine biosynthesis. Its function is as follows. Part of a heterotetrameric complex that catalyzes the two-step biosynthesis of anthranilate, a precursor for Pseudomonas quinolone signal (2-heptyl-3-hydroxy-4-quinolone; PQS) production which is required to induce the genes for the biosynthesis of the virulence factor pyocyanine (PCN), a characteristic blue-green phenazine pigment produced by P.aeruginosa. In the first step, the glutamine-binding beta subunit (PhnB) of anthranilate synthase (AS) provides the glutamine amidotransferase activity which generates ammonia as a substrate that, along with chorismate, is used in the second step, catalyzed by the large alpha subunit of AS (PhnA) to produce anthranilate. The protein is Anthranilate synthase component 1, pyocyanine specific of Pseudomonas aeruginosa (strain ATCC 15692 / DSM 22644 / CIP 104116 / JCM 14847 / LMG 12228 / 1C / PRS 101 / PAO1).